The chain runs to 297 residues: tRNA dimethylallyltransferase (297 aa).

9-16 (GPTASGKS) contributes to the ATP binding site. Residue 11-16 (TASGKS) participates in substrate binding. 2 interaction with substrate tRNA regions span residues 34-37 (DSMQ) and 155-159 (QRVIR).

This sequence belongs to the IPP transferase family. In terms of assembly, monomer. Mg(2+) serves as cofactor.

It catalyses the reaction adenosine(37) in tRNA + dimethylallyl diphosphate = N(6)-dimethylallyladenosine(37) in tRNA + diphosphate. Its function is as follows. Catalyzes the transfer of a dimethylallyl group onto the adenine at position 37 in tRNAs that read codons beginning with uridine, leading to the formation of N6-(dimethylallyl)adenosine (i(6)A). This is tRNA dimethylallyltransferase from Leuconostoc mesenteroides subsp. mesenteroides (strain ATCC 8293 / DSM 20343 / BCRC 11652 / CCM 1803 / JCM 6124 / NCDO 523 / NBRC 100496 / NCIMB 8023 / NCTC 12954 / NRRL B-1118 / 37Y).